A 454-amino-acid polypeptide reads, in one-letter code: Histidine--tRNA ligase (454 aa).

This sequence belongs to the class-II aminoacyl-tRNA synthetase family. As to quaternary structure, homodimer.

Its subcellular location is the cytoplasm. The enzyme catalyses tRNA(His) + L-histidine + ATP = L-histidyl-tRNA(His) + AMP + diphosphate + H(+). The chain is Histidine--tRNA ligase from Porphyromonas gingivalis (strain ATCC BAA-308 / W83).